A 395-amino-acid polypeptide reads, in one-letter code: Acetate kinase (395 aa).

A Mg(2+)-binding site is contributed by asparagine 7. Lysine 14 serves as a coordination point for ATP. Arginine 90 is a substrate binding site. Catalysis depends on aspartate 147, which acts as the Proton donor/acceptor. ATP contacts are provided by residues 207–211, 282–284, and 330–334; these read HLGNG, DFR, and GLGEN. Residue glutamate 383 coordinates Mg(2+).

Belongs to the acetokinase family. Homodimer. It depends on Mg(2+) as a cofactor. Requires Mn(2+) as cofactor.

It is found in the cytoplasm. The catalysed reaction is acetate + ATP = acetyl phosphate + ADP. Its pathway is metabolic intermediate biosynthesis; acetyl-CoA biosynthesis; acetyl-CoA from acetate: step 1/2. In terms of biological role, catalyzes the formation of acetyl phosphate from acetate and ATP. Can also catalyze the reverse reaction. This Lachnoclostridium phytofermentans (strain ATCC 700394 / DSM 18823 / ISDg) (Clostridium phytofermentans) protein is Acetate kinase.